Reading from the N-terminus, the 436-residue chain is Cyclic GMP-AMP synthase (436 aa).

GTP is bound at residue Gln-112–Tyr-117. Residues Asp-131 and Asp-133 each contribute to the Mg(2+) site. Arg-182 is a binding site for ATP. Asp-193 serves as a coordination point for Mg(2+). Ser-259 serves as a coordination point for ATP. Residues Lys-287, Ser-301, and Asp-348 each coordinate GTP. 2 disordered regions span residues Arg-339–Lys-358 and Ala-417–Gly-436. Residues Glu-419–Gly-436 show a composition bias toward polar residues. Gly-436 participates in a covalent cross-link: Glycyl lysine isopeptide (Gly-Lys) (interchain with K-? in acceptor proteins).

The protein belongs to the CD-NTase family. A01 subfamily. Monomer. Interacts with Cap2 in the presence and absence of phage T2. A Cap2 dimer is bound on either side by a DncV monomer. Requires Mg(2+) as cofactor. In terms of processing, in bacteria expressing capV-cdnD-cap2, this protein is conjugated to a number of other proteins (by Cap2 via this protein's C-terminal Gly residue), many of which are involved in metabolism. More conjugated protein is found in the absence of Cap3.

The enzyme catalyses GTP + ATP = 3',3'-cGAMP + 2 diphosphate. Primed for activation by Cap2 which conjugates it to cellular proteins; priming is target protein-specific (green fluorescent protein does not activate the enzyme), but which protein(s) activate is unclear. Enzymatic activity of DncV is inhibited by folate-like molecules, such as 5-methyltetrahydrofolate di-glutamate and 5-methyltetrahydrofolate, suggesting the existence of a signaling pathway that links folate-like metabolism cofactors to the regulation of cyclic dinucleotide second messenger synthesis. Lacks a regulatory loop and is constitutively activated. Cyclic nucleotide synthase (second messenger synthase) of a CBASS antivirus system. CBASS (cyclic oligonucleotide-based antiphage signaling system) provides immunity against bacteriophages. The CD-NTase protein (DncV, this protein) synthesizes cyclic nucleotides in response to infection; these serve as specific second messenger signals. The signals activate a diverse range of effectors, leading to bacterial cell death and thus abortive phage infection. A type II-A(GA) CBASS system. Functionally, catalyzes the synthesis of 3',3'-cyclic GMP-AMP (cGAMP), a second messenger in cell signal transduction, from GTP and ATP in response to phage infection. Also able to produce c-di-AMP and c-di-GMP from ATP and GTP, respectively; however, cGAMP is the dominant molecule produced by DncV in vivo, contrary to the 2'3'-cGAMP produced by eukaryotes. Is required for efficient V.cholerae intestinal colonization, and down-regulates the colonization-influencing process of chemotaxis. Is not active with dATP, TTP, UTP or CTP. Its product controls the activity of cGAMP-activated phospholipase CapV, a patatin-like lipase that is a direct cGAMP receptor encoded in the dncV operon. Its function is as follows. Protects E.coli against phage infection. When the CBASS operon (capV-dncV-cap2-cap3) is introduced in E.coli MG1655 there is about 100-fold protection against phages P1 and T2. When the operon is introduced in E.coli MG1655 there is a more than 10(3) decrease in the efficiency of T2 plaque formation. Protects 100-fold against phage T5, offers no protection against T7. When the operon is introduced in E.coli MG1655 it protects against phages T2, T4, T5 and T6. Another paper shows the operon confers protection against phages P1, T2, T5 and T6 but not T4 or lambda. This chain is Cyclic GMP-AMP synthase, found in Vibrio cholerae serotype O1 (strain ATCC 39315 / El Tor Inaba N16961).